The primary structure comprises 308 residues: Tetraacyldisaccharide 4'-kinase (308 aa).

ATP is bound at residue 63-70 (SFGGNGKT).

It belongs to the LpxK family.

It catalyses the reaction a lipid A disaccharide + ATP = a lipid IVA + ADP + H(+). It functions in the pathway glycolipid biosynthesis; lipid IV(A) biosynthesis; lipid IV(A) from (3R)-3-hydroxytetradecanoyl-[acyl-carrier-protein] and UDP-N-acetyl-alpha-D-glucosamine: step 6/6. Its function is as follows. Transfers the gamma-phosphate of ATP to the 4'-position of a tetraacyldisaccharide 1-phosphate intermediate (termed DS-1-P) to form tetraacyldisaccharide 1,4'-bis-phosphate (lipid IVA). In Campylobacter jejuni subsp. jejuni serotype O:2 (strain ATCC 700819 / NCTC 11168), this protein is Tetraacyldisaccharide 4'-kinase.